The primary structure comprises 184 residues: Helix-loop-helix protein ngn-1 (184 aa).

The tract at residues 1-55 is disordered; it reads MYHHSPFYPHHLQTGEQDLDMERENDMDQNSKNSTQKPVKREKRRYRCRKRSPAT. Polar residues predominate over residues 28 to 37; sequence DQNSKNSTQK. The segment covering 38-52 has biased composition (basic residues); that stretch reads PVKREKRRYRCRKRS. The interval 62-75 is basic motif; that stretch reads VRRDKANARERRRM. One can recognise a bHLH domain in the interval 62–114; sequence VRRDKANARERRRMNSLNDALEHLRGILPALPDEPKMTKIETLRKAQEYIASL. A helix-loop-helix motif region spans residues 76 to 114; it reads NSLNDALEHLRGILPALPDEPKMTKIETLRKAQEYIASL. The segment at 164–184 is disordered; that stretch reads SNPPSQMYYHHHHQSPSFPHH. Positions 172–184 are enriched in basic residues; it reads YHHHHQSPSFPHH.

As to quaternary structure, interacts with hlh-2; the interaction is direct.

Its subcellular location is the nucleus. Acts as a transcriptional regulator. Regulates expression of various genes, including homeobox protein unc-42 and helix-loop-helix protein hlh-34. Required for embryonic viability, neuromuscular development, organization of the nerve ring and neuronal cell body location. Regulates AIY neuron axon morphology and cell fate. Plays a role in cell autonomously establishing a neuronal left-right asymmetry. Involved in regulating glial specification. The protein is Helix-loop-helix protein ngn-1 of Caenorhabditis elegans.